The sequence spans 635 residues: Protein OPG056 (635 aa).

It belongs to the orthopoxvirus OPG056 family. As to quaternary structure, interacts with protein OPG164. Interacts with protein OPG064.

The protein localises to the virion membrane. It localises to the host endosome. In terms of biological role, plays a role in intracellular enveloped virus (IEV) transport to the cell surface through microtubule transport. Together with protein OPG064, forms a complex that interacts with host KLC2 (kinesin light chain isoform 2) to engage the kinesin-1 complex and thereby promote IEV trafficking. The chain is Protein OPG056 (OPG056) from Homo sapiens (Human).